We begin with the raw amino-acid sequence, 87 residues long: uncharacterized protein (87 aa).

The helical transmembrane segment at 25 to 47 (FFWEVCNMILFIIIALCGYLLFS) threads the bilayer.

It localises to the membrane. This is an uncharacterized protein from Bacillus subtilis (strain 168).